The sequence spans 654 residues: Endoplasmic reticulum chaperone BiP (654 aa).

Positions 1–18 (MKLSLVAAMLLLLSAARA) are cleaved as a signal peptide. The required for interaction with ELAPOR1 stretch occupies residues 1–80 (MKLSLVAAML…EGERLIGDAA (80 aa)). 36 to 39 (GTTY) is an ATP binding site. Residue S86 is modified to Phosphoserine. Residue K96 coordinates ATP. K125 is subject to N6-acetyllysine. Residues 125–280 (KPYIQVDIGG…KKKTGKDVRK (156 aa)) form a nucleotide-binding (NBD) region. Y160 is subject to 3'-nitrotyrosine. The residue at position 213 (K213) is an N6-acetyllysine. 227–229 (GGT) is an ATP binding site. K271 bears the N6-acetyllysine mark. An ATP-binding site is contributed by 293–300 (EKAKRALS). K326 is subject to N6-acetyllysine. A Glycyl lysine isopeptide (Lys-Gly) (interchain with G-Cter in SUMO2) cross-link involves residue K352. Position 353 is an N6-acetyllysine; alternate (K353). K353 is covalently cross-linked (Glycyl lysine isopeptide (Lys-Gly) (interchain with G-Cter in SUMO1); alternate). 364-367 (GSTR) is a binding site for ATP. An interdomain linker region spans residues 409-419 (QDTGDLALLDV). A substrate-binding (SBD) region spans residues 420-500 (CPLTLGIETV…PRGVPQIEVT (81 aa)). K447 bears the N6-succinyllysine mark. R492 carries the post-translational modification Omega-N-methylarginine. T518 carries the O-AMP-threonine; alternate modification. Position 518 is a phosphothreonine; alternate (T518). Residue K585 is modified to N6,N6,N6-trimethyllysine; by METTL21A; in vitro. The residue at position 585 (K585) is an N6,N6-dimethyllysine; alternate. At K585 the chain carries N6-methyllysine; alternate. N6-methyllysine is present on K591. Residues 633–654 (KLYGSAGPPPTGEEDTAEKDEL) are disordered. Phosphothreonine occurs at positions 643 and 648. Over residues 644–654 (GEEDTAEKDEL) the composition is skewed to acidic residues. The short motif at 651-654 (KDEL) is the Prevents secretion from ER element.

Belongs to the heat shock protein 70 family. As to quaternary structure, monomer and homooligomer; homooligomerization via the interdomain linker inactivates the chaperone activity and acts as a storage of HSPA5/BiP molecules. Interacts with DNAJC1 (via J domain). Component of an EIF2 complex at least composed of CELF1/CUGBP1, CALR, CALR3, EIF2S1, EIF2S2, HSP90B1 and HSPA5. Part of a large chaperone multiprotein complex comprising DNAJB11, HSP90B1, HSPA5, HYOU, PDIA2, PDIA4, PDIA6, PPIB, SDF2L1, UGGT1 and very small amounts of ERP29, but not, or at very low levels, CALR nor CANX. Interacts with TMEM132A and TRIM21. May form a complex with ERLEC1, OS9, SEL1L and SYVN1. Interacts with DNAJC10. Interacts with DNAJB9/ERdj4; leading to recruit HSPA5/BiP to ERN1/IRE1. Interacts with ERN1/IRE1 (via luminal domain); the interaction takes place following interaction with DNAJB9/ERdj4 and leads to inactivate ERN1/IRE1, the interaction also competitively inhibits ERN1 interaction with MANF. Interacts directly with MANF (via SAP domain); the interaction inhibits ATP binding to HSPA5/BiP and subsequent nucleotide exchange. Interacts with EIF2AK3/PERK (via luminal domain); interaction leads to inactivate EIF2AK3/PERK. Interacts with MX1. Interacts with METTL23. Interacts with CEMIP; the interaction induces calcium leakage from the endoplasmic reticulum and cell migration. Interacts with PCSK4 form; the interaction takes place in the endoplasmic reticulum. Interacts with CIPC. Interacts with CCDC88B (via C-terminus); the interaction opposes ERN1-mediated JNK activation, protecting against apoptosis. Interacts with INPP5K; necessary for INPP5K localization at the endoplasmic reticulum. Interacts with MANF; the interaction is direct. Interacts with LOXL2; leading to activate the ERN1/IRE1-XBP1 pathway of the unfolded protein response. Interacts with CLU under stressed condition; interaction increases CLU protein stability; facilitates its retrotranslocation and redistribution to the mitochondria; cooperatively suppress stress-induced apoptosis by stabilizing mitochondrial membrane integrity. Interacts with CCDC47. Interacts with CLN3. Interacts with ELAPOR1; may regulate the function of HSPA5 in apoptosis and cell proliferation. Interacts with CASP7. Interacts with ILDR2; the interaction stabilizes ILDR2 expression. Interacts with ADAM7. In unstressed cells, AMPylation at Thr-518 by FICD inactivates the chaperome activity: AMPylated form is locked in a relatively inert state and only weakly stimulated by J domain-containing proteins. In response to endoplasmic reticulum stress, de-AMPylation by the same protein, FICD, restores the chaperone activity.

It is found in the endoplasmic reticulum lumen. The protein localises to the melanosome. Its subcellular location is the cytoplasm. It localises to the cell surface. It carries out the reaction ATP + H2O = ADP + phosphate + H(+). Its activity is regulated as follows. The chaperone activity is regulated by ATP-induced allosteric coupling of the nucleotide-binding (NBD) and substrate-binding (SBD) domains. In the ADP-bound and nucleotide-free (apo) states, the two domains have little interaction. In contrast, in the ATP-bound state the two domains are tightly coupled, which results in drastically accelerated kinetics in both binding and release of polypeptide substrates. J domain-containing co-chaperones (DNAJB9/ERdj4 or DNAJC10/ERdj5) stimulate the ATPase activity and are required for efficient substrate recognition by HSPA5/BiP. Homooligomerization inactivates participating HSPA5/BiP protomers and probably act as reservoirs to store HSPA5/BiP molecules when they are not needed by the cell. In terms of biological role, endoplasmic reticulum chaperone that plays a key role in protein folding and quality control in the endoplasmic reticulum lumen. Involved in the correct folding of proteins and degradation of misfolded proteins via its interaction with DNAJC10/ERdj5, probably to facilitate the release of DNAJC10/ERdj5 from its substrate. Acts as a key repressor of the EIF2AK3/PERK and ERN1/IRE1-mediated unfolded protein response (UPR). In the unstressed endoplasmic reticulum, recruited by DNAJB9/ERdj4 to the luminal region of ERN1/IRE1, leading to disrupt the dimerization of ERN1/IRE1, thereby inactivating ERN1/IRE1. Also binds and inactivates EIF2AK3/PERK in unstressed cells. Accumulation of misfolded protein in the endoplasmic reticulum causes release of HSPA5/BiP from ERN1/IRE1 and EIF2AK3/PERK, allowing their homodimerization and subsequent activation. Plays an auxiliary role in post-translational transport of small presecretory proteins across endoplasmic reticulum (ER). May function as an allosteric modulator for SEC61 channel-forming translocon complex, likely cooperating with SEC62 to enable the productive insertion of these precursors into SEC61 channel. Appears to specifically regulate translocation of precursors having inhibitory residues in their mature region that weaken channel gating. May also play a role in apoptosis and cell proliferation. The protein is Endoplasmic reticulum chaperone BiP of Pongo abelii (Sumatran orangutan).